We begin with the raw amino-acid sequence, 631 residues long: MSTWNPENDVDLLSGSEDEEDVSMKRDYHGREAILFVVDANLQTAGVERLLEALNIIRTAFISGLLVNDKDLIGLIFANTKHSPPPLEASALDNIVMPDNCAVFLPLRQLTKPIVEHYLEFMGGVETQFADVYGLAEPDGRGRFDLMIRLCIEMLEKCGKKLNNAKIAYVTDVREPHPSNSNHFQAALQKASDLEGKEFEFHVIPMVDDFDYEPFYKEFITLSRAIELDAFQVPDAQMLREILSDRKLKQDFLRRCLGHFSFYLGPNLSMSVQYYNYFQRRAYPRKVQILRRDNSVVRTKRVITVQKQKDDGSQDIEHEYQIKVTGGWYTCNVGERDLRISMDQLNRVRNLHKPQMMLLGFKHRSSLPEVSYIKPANFMYPDDQSIIGSKRLFRALWERCLVRDKIAICLFMCKRKSIPRYVALVPVEAPDNGEDKNYRSLLCGDGFKIVYLPEAKHIRHLDLQDWNNTENTADEQKVEFFQKIIKKLRVDYQPNLINDPSLDALQANLLALSLDFSTDTKGLDNLLDTSQQDKRIEKLLPDYEMFAPEAEPHKKRAAKSTTAGASGPKMAKIDDDQLKEFEFVKSLNKDEALTSCTAAQLHFILQHHFDVTMPKSSKKAKLVAKIEELHK.

A Ku domain is found at 262-487; it reads FYLGPNLSMS…VEFFQKIIKK (226 aa). The disordered stretch occupies residues 550–570; sequence AEPHKKRAAKSTTAGASGPKM.

This sequence belongs to the ku70 family. In terms of assembly, heterodimer of a 70 kDa and a 80 kDa subunit.

The protein localises to the nucleus. Its subcellular location is the chromosome. It carries out the reaction ATP + H2O = ADP + phosphate + H(+). Its function is as follows. Single-stranded DNA-dependent ATP-dependent helicase. Involved in non-homologous end joining (NHEJ) DNA double strand break repair. Sequence-specific DNA-binding protein that has a high affinity for a 31 bp sequence in the Yp1 gene. Site-specific DNA binding to 31 bp P element inverted repeats. The chain is ATP-dependent DNA helicase 2 subunit 1 (Irbp) from Drosophila melanogaster (Fruit fly).